We begin with the raw amino-acid sequence, 274 residues long: Mitochondrial outer membrane protein porin 4 (274 aa).

Gly-2 is subject to N-acetylglycine. Phosphoserine is present on Ser-76.

It belongs to the eukaryotic mitochondrial porin (TC 1.B.8.1) family. In terms of tissue distribution, widely expressed.

It is found in the cell membrane. It localises to the mitochondrion outer membrane. Functionally, forms a channel through the mitochondrial outer membrane that allows diffusion of small hydrophilic molecules. The channel adopts an open conformation at low or zero membrane potential and a closed conformation at potentials above 30-40 mV. The open state has a weak anion selectivity whereas the closed state is cation-selective. Involved in plant growth and development at the vegetative and reproductive stages. Is important for leaf and pollen development and mitochondrial membrane potential steady state. May be involved in disease resistance. The sequence is that of Mitochondrial outer membrane protein porin 4 (VDAC4) from Arabidopsis thaliana (Mouse-ear cress).